The chain runs to 396 residues: Na(+)/H(+) antiporter NhaA 2 (396 aa).

11 helical membrane-spanning segments follow: residues 17–37 (LSGL…NSDF), 62–82 (LLHW…GLEI), 98–118 (SFPI…YISL), 125–145 (GFGV…MLLG), 154–174 (LFLV…VAIF), 179–199 (LHFE…FLNY), 209–229 (IILG…STIA), 268–288 (FSAF…IIDF), 296–316 (LIVL…IFSF), 337–357 (IFAV…ISHL), and 368–388 (VKLG…VLLI).

This sequence belongs to the NhaA Na(+)/H(+) (TC 2.A.33) antiporter family.

It localises to the cell inner membrane. The enzyme catalyses Na(+)(in) + 2 H(+)(out) = Na(+)(out) + 2 H(+)(in). Na(+)/H(+) antiporter that extrudes sodium in exchange for external protons. This is Na(+)/H(+) antiporter NhaA 2 from Aliarcobacter butzleri (strain RM4018) (Arcobacter butzleri).